Consider the following 258-residue polypeptide: Probable succinate transporter subunit YjjP (258 aa).

The next 5 helical transmembrane spans lie at 116–137 (YPRW…KLNN), 143–160 (AVVT…RQLL), 171–191 (FCIT…LPAF), 197–217 (IAMA…NAVA), and 231–251 (WAIA…AMTM).

Belongs to the ThrE exporter (TC 2.A.79) family. The transporter is composed of YjjB and YjjP.

The protein resides in the cell inner membrane. Its function is as follows. Involved in succinate export with YjjB. Both proteins are required for export. Participates in succinate export, but also in the export of other dicarboxylates, such as fumarate and malate. Contributes to succinate production under both aerobic and anaerobic conditions, and increases fumarate and malate production during anaerobic succinate production. In Klebsiella aerogenes (strain ATCC 13048 / DSM 30053 / CCUG 1429 / JCM 1235 / KCTC 2190 / NBRC 13534 / NCIMB 10102 / NCTC 10006 / CDC 819-56) (Enterobacter aerogenes), this protein is Probable succinate transporter subunit YjjP.